The following is a 284-amino-acid chain: uncharacterized protein (284 aa).

A compositionally biased stretch (polar residues) spans 1–10 (MSNSVTNFEM). The disordered stretch occupies residues 1-28 (MSNSVTNFEMSSVLPGKKPCQGKNNESQ).

This is an uncharacterized protein from Escherichia coli (strain K12).